A 122-amino-acid chain; its full sequence is Large ribosomal subunit protein uL14 (122 aa).

It belongs to the universal ribosomal protein uL14 family. Part of the 50S ribosomal subunit. Forms a cluster with proteins L3 and L19. In the 70S ribosome, L14 and L19 interact and together make contacts with the 16S rRNA in bridges B5 and B8.

Its function is as follows. Binds to 23S rRNA. Forms part of two intersubunit bridges in the 70S ribosome. The sequence is that of Large ribosomal subunit protein uL14 from Lactobacillus delbrueckii subsp. bulgaricus (strain ATCC 11842 / DSM 20081 / BCRC 10696 / JCM 1002 / NBRC 13953 / NCIMB 11778 / NCTC 12712 / WDCM 00102 / Lb 14).